The chain runs to 260 residues: Zinc finger protein 575 (260 aa).

The disordered stretch occupies residues 22–81 (PGLGPGRWLLPGAHQPSCPPAPHQGPLQKPSQSAPGPTASASAPPRPRRRPPPQRPHRCP). A compositionally biased stretch (low complexity) spans 51–64 (PSQSAPGPTASASA). The segment covering 67–78 (RPRRRPPPQRPH) has biased composition (basic residues). C2H2-type zinc fingers lie at residues 78 to 100 (HRCP…RLAH), 106 to 128 (HPCP…RLTH), 134 to 156 (HPCP…LWTH), 162 to 184 (YPCP…RHTH), 192 to 214 (YPCP…RLCH), and 228 to 255 (HRCS…QVEH).

The protein belongs to the krueppel C2H2-type zinc-finger protein family.

It is found in the nucleus. In terms of biological role, may be involved in transcriptional regulation. This chain is Zinc finger protein 575 (ZNF575), found in Macaca fascicularis (Crab-eating macaque).